The chain runs to 447 residues: Sporulation protein YpeB (447 aa).

It belongs to the YpeB family.

Functionally, required for spore cortex hydrolysis during germination. Appears to be required for either expression, localization, activation or function of SleB. This is Sporulation protein YpeB from Halalkalibacterium halodurans (strain ATCC BAA-125 / DSM 18197 / FERM 7344 / JCM 9153 / C-125) (Bacillus halodurans).